Consider the following 403-residue polypeptide: uncharacterized protein (403 aa).

Helical transmembrane passes span 31-51 (FLIATIIGPLIIIALAIIGSF), 186-206 (LPIGFVFLLYMAISSLSGIIV), 238-258 (ISAVGLLQIGIWVLFALPIII), 268-288 (LAIFALIYFVLGYLFYSSLLC), 303-323 (LISPIIIIQIIPIMFMNTIMV), and 355-375 (LIEIVLSTAIMIVSIVISFIL).

This sequence to B.subtilis YhaP.

It localises to the cell membrane. This is an uncharacterized protein from Methanocaldococcus jannaschii (strain ATCC 43067 / DSM 2661 / JAL-1 / JCM 10045 / NBRC 100440) (Methanococcus jannaschii).